The following is a 91-amino-acid chain: Elongation factor 1-beta (91 aa).

It belongs to the EF-1-beta/EF-1-delta family.

Functionally, promotes the exchange of GDP for GTP in EF-1-alpha/GDP, thus allowing the regeneration of EF-1-alpha/GTP that could then be used to form the ternary complex EF-1-alpha/GTP/AAtRNA. This chain is Elongation factor 1-beta (ef1b), found in Pyrococcus horikoshii (strain ATCC 700860 / DSM 12428 / JCM 9974 / NBRC 100139 / OT-3).